Reading from the N-terminus, the 343-residue chain is Holliday junction branch migration complex subunit RuvB (343 aa).

The segment at 1–186 (MTEEFDIRQE…FGINLHLEYY (186 aa)) is large ATPase domain (RuvB-L). ATP contacts are provided by residues L25, R26, G67, K70, T71, T72, 133-135 (EDY), R176, Y186, and R223. T71 serves as a coordination point for Mg(2+). Residues 187 to 257 (DVHTITGIVE…IACYALEALN (71 aa)) form a small ATPAse domain (RuvB-S) region. The tract at residues 260–343 (RYGLDNVDHK…PRPHRPSLFD (84 aa)) is head domain (RuvB-H). The DNA site is built by R315 and R320.

The protein belongs to the RuvB family. Homohexamer. Forms an RuvA(8)-RuvB(12)-Holliday junction (HJ) complex. HJ DNA is sandwiched between 2 RuvA tetramers; dsDNA enters through RuvA and exits via RuvB. An RuvB hexamer assembles on each DNA strand where it exits the tetramer. Each RuvB hexamer is contacted by two RuvA subunits (via domain III) on 2 adjacent RuvB subunits; this complex drives branch migration. In the full resolvosome a probable DNA-RuvA(4)-RuvB(12)-RuvC(2) complex forms which resolves the HJ.

It is found in the cytoplasm. The enzyme catalyses ATP + H2O = ADP + phosphate + H(+). Its function is as follows. The RuvA-RuvB-RuvC complex processes Holliday junction (HJ) DNA during genetic recombination and DNA repair, while the RuvA-RuvB complex plays an important role in the rescue of blocked DNA replication forks via replication fork reversal (RFR). RuvA specifically binds to HJ cruciform DNA, conferring on it an open structure. The RuvB hexamer acts as an ATP-dependent pump, pulling dsDNA into and through the RuvAB complex. RuvB forms 2 homohexamers on either side of HJ DNA bound by 1 or 2 RuvA tetramers; 4 subunits per hexamer contact DNA at a time. Coordinated motions by a converter formed by DNA-disengaged RuvB subunits stimulates ATP hydrolysis and nucleotide exchange. Immobilization of the converter enables RuvB to convert the ATP-contained energy into a lever motion, pulling 2 nucleotides of DNA out of the RuvA tetramer per ATP hydrolyzed, thus driving DNA branch migration. The RuvB motors rotate together with the DNA substrate, which together with the progressing nucleotide cycle form the mechanistic basis for DNA recombination by continuous HJ branch migration. Branch migration allows RuvC to scan DNA until it finds its consensus sequence, where it cleaves and resolves cruciform DNA. In Porphyromonas gingivalis (strain ATCC BAA-308 / W83), this protein is Holliday junction branch migration complex subunit RuvB.